The sequence spans 228 residues: Immunogenic protein MPB64 (228 aa).

An N-terminal signal peptide occupies residues 1–23 (MRIKIFMLVTAVVLLCCSGVATA).

The protein belongs to the RsiV family.

Its subcellular location is the secreted. This chain is Immunogenic protein MPB64 (mpb64), found in Mycobacterium bovis (strain ATCC BAA-935 / AF2122/97).